A 141-amino-acid polypeptide reads, in one-letter code: Deoxyuridine 5'-triphosphate nucleotidohydrolase (141 aa).

Belongs to the dUTPase family. Requires Mg(2+) as cofactor.

The catalysed reaction is dUTP + H2O = dUMP + diphosphate + H(+). It participates in pyrimidine metabolism; dUMP biosynthesis; dUMP from dCTP (dUTP route): step 2/2. Its function is as follows. This enzyme is involved in nucleotide metabolism: it produces dUMP, the immediate precursor of thymidine nucleotides and it decreases the intracellular concentration of dUTP so that uracil cannot be incorporated into DNA. The sequence is that of Deoxyuridine 5'-triphosphate nucleotidohydrolase from Chlorella (PBCV-1).